Here is a 381-residue protein sequence, read N- to C-terminus: Probable glucuronosyltransferase Os04g0103100 (381 aa).

Over 1–69 the chain is Cytoplasmic; that stretch reads MASIRRPHSP…HTSFRRPLPR (69 aa). The segment at 21–50 is disordered; sequence HLGPFASSSPPSSPLRHSSSSSSPRSAAHH. Residues 26–46 show a composition bias toward low complexity; sequence ASSSPPSSPLRHSSSSSSPRS. The chain crosses the membrane as a helical; Signal-anchor for type II membrane protein span at residues 70 to 90; the sequence is FAAFFLLGSFLGLLHFLSHLP. The Lumenal portion of the chain corresponds to 91–381; sequence RPLGPIPNPN…TDLDVIIPLK (291 aa). The disordered stretch occupies residues 96 to 122; that stretch reads IPNPNSHHRHRDPFPILQHPHPPSTPH. 2 N-linked (GlcNAc...) asparagine glycosylation sites follow: Asn-194 and Asn-296.

It belongs to the glycosyltransferase 43 family.

The protein resides in the golgi apparatus membrane. Functionally, involved in the synthesis of glucuronoxylan hemicellulose in secondary cell walls. This is Probable glucuronosyltransferase Os04g0103100 from Oryza sativa subsp. japonica (Rice).